A 1117-amino-acid polypeptide reads, in one-letter code: ATP-dependent RNA helicase mtr4 (1117 aa).

Positions 19 to 86 (KSLKEESKNS…DNQDLIPNND (68 aa)) are disordered. Positions 65 to 79 (SATKRAKIENLKDNQ) are enriched in basic and acidic residues. One can recognise a Helicase ATP-binding domain in the interval 207-363 (IACIERQESV…WITKIHRQPC (157 aa)). 220-227 (AHTSAGKT) lines the ATP pocket. Residues 311-314 (DEIH) carry the DEIH box motif. The disordered stretch occupies residues 414-433 (GDDPAAMATKGNAKKGKTGK). The 202-residue stretch at 441 to 642 (DIYKIVKMIM…LSYNMILNLL (202 aa)) folds into the Helicase C-terminal domain.

This sequence belongs to the helicase family. SKI2 subfamily. As to quaternary structure, component of the TRAMP complex composed of at least cid14, mtr4, and air1.

It localises to the nucleus. In terms of biological role, component of the TRAMP complex which has a poly(A) RNA polymerase activity and is involved in a post-transcriptional quality control mechanism limiting inappropriate expression of genetic information. Polyadenylation is required for the degradative activity of the exosome on several of its nuclear RNA substrates. Required for heterochromatic gene silencing at centromeric repeats by either exosome- or RNAi-mediated degradation of heterochromatic transcripts. The polypeptide is ATP-dependent RNA helicase mtr4 (mtr4) (Schizosaccharomyces pombe (strain 972 / ATCC 24843) (Fission yeast)).